The sequence spans 417 residues: UDP-N-acetylglucosamine 1-carboxyvinyltransferase (417 aa).

Residue 22–23 (KN) coordinates phosphoenolpyruvate. Arg-93 lines the UDP-N-acetyl-alpha-D-glucosamine pocket. Cys-117 functions as the Proton donor in the catalytic mechanism. Position 117 is a 2-(S-cysteinyl)pyruvic acid O-phosphothioketal (Cys-117). UDP-N-acetyl-alpha-D-glucosamine is bound by residues 122–126 (RPVDL), Asp-305, and Ile-327.

The protein belongs to the EPSP synthase family. MurA subfamily.

The protein localises to the cytoplasm. It carries out the reaction phosphoenolpyruvate + UDP-N-acetyl-alpha-D-glucosamine = UDP-N-acetyl-3-O-(1-carboxyvinyl)-alpha-D-glucosamine + phosphate. It functions in the pathway cell wall biogenesis; peptidoglycan biosynthesis. Functionally, cell wall formation. Adds enolpyruvyl to UDP-N-acetylglucosamine. This Thiobacillus denitrificans (strain ATCC 25259 / T1) protein is UDP-N-acetylglucosamine 1-carboxyvinyltransferase.